A 134-amino-acid polypeptide reads, in one-letter code: Methylglyoxal synthase (134 aa).

Residues methionine 1 to glycine 134 form the MGS-like domain. Substrate-binding positions include histidine 8, lysine 12, threonine 34–threonine 37, and serine 54–glycine 55. The Proton donor/acceptor role is filled by aspartate 60. Position 87 (histidine 87) interacts with substrate.

Belongs to the methylglyoxal synthase family.

The enzyme catalyses dihydroxyacetone phosphate = methylglyoxal + phosphate. Catalyzes the formation of methylglyoxal from dihydroxyacetone phosphate. This chain is Methylglyoxal synthase, found in Alkaliphilus metalliredigens (strain QYMF).